Reading from the N-terminus, the 265-residue chain is C-type lectin domain family 12 member A (265 aa).

Topologically, residues Met1 to Ala43 are cytoplasmic. An ITIM motif motif is present at residues Val5–Leu10. At Tyr7 the chain carries Phosphotyrosine. The helical; Signal-anchor for type II membrane protein transmembrane segment at Leu44–Phe64 threads the bilayer. Topologically, residues His65–Ala265 are extracellular. 2 N-linked (GlcNAc...) asparagine glycosylation sites follow: Asn88 and Asn98. 4 cysteine pairs are disulfide-bonded: Cys118/Cys130, Cys133/Cys144, Cys161/Cys248, and Cys227/Cys240. The region spanning His140–Glu249 is the C-type lectin domain. The N-linked (GlcNAc...) asparagine glycan is linked to Asn165.

As to quaternary structure, homodimer; disulfide-linked. Interacts (when the ITIM motif is phosphorylated) with PTPN6 and PTPN11. In terms of processing, phosphorylated at Tyr-7 by SRC in the ITIM motif following ligand-binding, promoting recruitment of tyrosine-protein phosphatases PTPN6 and PTPN11. Post-translationally, highly N-glycosylated; glycosylation varies between cell types. Preferentially expressed in lymphoid tissues and immune cells, including natural killer (NK) cells, T-cells, dendritic cells and monocytes or macrophages. Detected in spleen macrophage-rich red pulp and in lymph node (at protein level). Detected in peripheral blood leukocytes, dendritic cells, bone marrow, monocytes, mononuclear leukocytes and macrophages.

It localises to the cell membrane. Functionally, myeloid inhibitory C-type lectin receptor that acts as a negative regulator of myeloid cell activation. Myeloid cell inhibition is required to limit proinflammatory pathways and protect against excessive inflammation. Specifically recognizes and binds various structures, such as neutrophil extracellular traps (NETs) or monosodium urate crystals. Also acts as a pattern-recognition receptor for pathogen-associated molecules, such as plasmodium hemozoin or mycobacterial micolic acid. Ligand-binding induces phosphorylation of its ITIM motif, followed by recruitment of tyrosine-protein phosphatases PTPN6 and PTPN11, which counteract tyrosine-protein kinase SYK, thereby preventing myeloid cell activation. Acts as a pattern-recognition receptor for NETs in neutrophils: specifically recognizes DNA in NETs, leading to inhibit neutrophil activation and limit further NET formation. This regulation is essential for controlling key neutrophil responses and limit NET-mediated inflammatory conditions. Also recognizes dead cells by acting as a receptor for monosodium urate crystals, leading to down-regulate neutrophil activation. Binding to monosodium urate crystals also promotes the type I interferon response. Acts as an inhibitor of natural killer (NK) cell cytotoxicity. Also acts as an ihibitor of dendritic cell maturation in an IL10-dependent manner. This chain is C-type lectin domain family 12 member A, found in Homo sapiens (Human).